The primary structure comprises 57 residues: UPF0391 membrane protein RPA3505 (57 aa).

The next 2 helical transmembrane spans lie at 4-24 (WVVT…GGIA) and 30-50 (IAKI…VISI).

The protein belongs to the UPF0391 family.

It is found in the cell membrane. This Rhodopseudomonas palustris (strain ATCC BAA-98 / CGA009) protein is UPF0391 membrane protein RPA3505.